Consider the following 192-residue polypeptide: UPF0462 protein C4orf33 homolog (192 aa).

The protein belongs to the UPF0462 family.

This is UPF0462 protein C4orf33 homolog (D3Ertd751e) from Mus musculus (Mouse).